A 122-amino-acid chain; its full sequence is Large ribosomal subunit protein uL18 (122 aa).

This sequence belongs to the universal ribosomal protein uL18 family. In terms of assembly, part of the 50S ribosomal subunit; part of the 5S rRNA/L5/L18/L25 subcomplex. Contacts the 5S and 23S rRNAs.

Functionally, this is one of the proteins that bind and probably mediate the attachment of the 5S RNA into the large ribosomal subunit, where it forms part of the central protuberance. The sequence is that of Large ribosomal subunit protein uL18 from Lachnoclostridium phytofermentans (strain ATCC 700394 / DSM 18823 / ISDg) (Clostridium phytofermentans).